A 415-amino-acid polypeptide reads, in one-letter code: Cyclin-A2 (415 aa).

It belongs to the cyclin family. Cyclin AB subfamily. In terms of assembly, interacts with the CDK1 and CDK2 protein kinases to form serine/threonine kinase holoenzyme complexes. Ubiquitous.

The protein localises to the nucleus. The protein resides in the cytoplasm. Functionally, cyclin which controls both the G1/S and the G2/M transition phases of the cell cycle. Functions through the formation of specific serine/threonine kinase holoenzyme complexes with the cyclin-dependent protein kinases CDK1 and CDK2. The cyclin subunit confers the substrate specificity of these complexes and differentially interacts with and activates CDK1 and CDK2 throughout the cell cycle. The chain is Cyclin-A2 (ccna2) from Xenopus laevis (African clawed frog).